We begin with the raw amino-acid sequence, 459 residues long: Argininosuccinate lyase (459 aa).

It belongs to the lyase 1 family. Argininosuccinate lyase subfamily.

The protein localises to the cytoplasm. The enzyme catalyses 2-(N(omega)-L-arginino)succinate = fumarate + L-arginine. It participates in amino-acid biosynthesis; L-arginine biosynthesis; L-arginine from L-ornithine and carbamoyl phosphate: step 3/3. This chain is Argininosuccinate lyase, found in Staphylococcus aureus (strain Mu3 / ATCC 700698).